Consider the following 422-residue polypeptide: Glutamyl-tRNA reductase (422 aa).

Residues 49 to 52, Ser-107, 112 to 114, and Gln-118 contribute to the substrate site; these read TCNR and EPQ. Cys-50 serves as the catalytic Nucleophile. Residue 187-192 participates in NADP(+) binding; sequence GAGETI.

The protein belongs to the glutamyl-tRNA reductase family. As to quaternary structure, homodimer.

It carries out the reaction (S)-4-amino-5-oxopentanoate + tRNA(Glu) + NADP(+) = L-glutamyl-tRNA(Glu) + NADPH + H(+). The protein operates within porphyrin-containing compound metabolism; protoporphyrin-IX biosynthesis; 5-aminolevulinate from L-glutamyl-tRNA(Glu): step 1/2. In terms of biological role, catalyzes the NADPH-dependent reduction of glutamyl-tRNA(Glu) to glutamate 1-semialdehyde (GSA). The protein is Glutamyl-tRNA reductase of Pseudomonas paraeruginosa (strain DSM 24068 / PA7) (Pseudomonas aeruginosa (strain PA7)).